A 271-amino-acid polypeptide reads, in one-letter code: MTDLKTIIEEAYQNKDNFTTDTVPKKIHQAIHQTIELLDNGELRIAEKQNGQWNTNEWAKMAILLYFKTEPLKTFDAGYTFFYDKIPLKYTNNTSQPQSGVRVVPHAIVRKGAYLAPNTVLMPSYINIGAYVDSGTLIDTWATVGSCAQIGKNVHLSGGAGIGGVLEPLQAHPTIIEDDCFIGARSEIVEGVMVEKGSVISMGVFVGQSTPIYNRQTQEITYGRIPAGSVVIPGSLPSKDGHYNRYSAIIVKQVDEKTRSKVSLNELLREG.

Belongs to the transferase hexapeptide repeat family.

The protein localises to the cytoplasm. The enzyme catalyses (S)-2,3,4,5-tetrahydrodipicolinate + succinyl-CoA + H2O = (S)-2-succinylamino-6-oxoheptanedioate + CoA. The protein operates within amino-acid biosynthesis; L-lysine biosynthesis via DAP pathway; LL-2,6-diaminopimelate from (S)-tetrahydrodipicolinate (succinylase route): step 1/3. The sequence is that of 2,3,4,5-tetrahydropyridine-2,6-dicarboxylate N-succinyltransferase from Coxiella burnetii (strain CbuG_Q212) (Coxiella burnetii (strain Q212)).